Here is a 324-residue protein sequence, read N- to C-terminus: MKIVTYSKNVFIPLTRNCRNRCDYCGFRSEEIGVMSAEEVRKILSAARGAKEALFTFGERPDEVYPEFKAMLLEMGYKSMVDYILEMNKIAVEMGFLPHTNAGILSKEEMRKLKPYNASMGLMLEQAVELECHANSPGKKPEVRIKMIRDAGKLQIPFTTGILVGIGEGREDRLYSLEIIAEIQDNYGHIQEVIVQNFKPKKGTPMENTPPPTLEEMLEAVKAAREILPQEVAIQIPPNLVDDIYPFLKAGANDVGGISNVTHDYINPESPWPEVERLERALRGEFILKERLPIYPRFVKLKWYGEALEPLIEKYSDADGYARP.

One can recognise a Radical SAM core domain in the interval 4–239; it reads VTYSKNVFIP…QEVAIQIPPN (236 aa). Positions 18, 22, and 25 each coordinate [4Fe-4S] cluster.

Belongs to the radical SAM superfamily. CofG family. As to quaternary structure, consists of two subunits, CofG and CofH. Requires [4Fe-4S] cluster as cofactor.

The enzyme catalyses 5-amino-5-(4-hydroxybenzyl)-6-(D-ribitylimino)-5,6-dihydrouracil + S-adenosyl-L-methionine = 7,8-didemethyl-8-hydroxy-5-deazariboflavin + 5'-deoxyadenosine + L-methionine + NH4(+) + H(+). It participates in cofactor biosynthesis; coenzyme F0 biosynthesis. Its function is as follows. Catalyzes the radical-mediated synthesis of 7,8-didemethyl-8-hydroxy-5-deazariboflavin from 5-amino-5-(4-hydroxybenzyl)-6-(D-ribitylimino)-5,6-dihydrouracil. The protein is 7,8-didemethyl-8-hydroxy-5-deazariboflavin synthase of Archaeoglobus fulgidus (strain ATCC 49558 / DSM 4304 / JCM 9628 / NBRC 100126 / VC-16).